Here is a 31-residue protein sequence, read N- to C-terminus: Spectrin beta chain, non-erythrocytic 1 (31 aa).

3 Spectrin repeats span residues 1-10, 11-19, and 20-31; these read VLLLSQDYGK, YKEVAELTR, and TQILAASYELHK. The residue at position 27 (Tyr27) is a Phosphotyrosine.

Belongs to the spectrin family. As to quaternary structure, interacts with ANK2. Interacts with CPNE4 (via VWFA domain). Like erythrocyte spectrin, the spectrin-like proteins are capable to form dimers which can further associate to tetramers. Associates with the gamma-tubulin complex in brain, but not in kidney, liver, sperm, or uterus. Interacts with CAMSAP1. Can form heterodimers with SPTAN1.

The protein resides in the cytoplasm. The protein localises to the cytoskeleton. It is found in the myofibril. Its subcellular location is the sarcomere. It localises to the m line. The protein resides in the cytosol. The protein localises to the cell membrane. In terms of biological role, fodrin, which seems to be involved in secretion, interacts with calmodulin in a calcium-dependent manner and is thus candidate for the calcium-dependent movement of the cytoskeleton at the membrane. Plays a critical role in central nervous system development and function. The protein is Spectrin beta chain, non-erythrocytic 1 (SPTBN1) of Capra hircus (Goat).